Reading from the N-terminus, the 393-residue chain is Formate-dependent phosphoribosylglycinamide formyltransferase (393 aa).

N(1)-(5-phospho-beta-D-ribosyl)glycinamide-binding positions include Glu17 to Leu18 and Glu77. Residues Arg109, Lys150, Ser155–Gln160, Glu190–Leu193, and Glu198 contribute to the ATP site. The ATP-grasp domain maps to Asp114–Leu304. Positions 263 and 275 each coordinate Mg(2+). N(1)-(5-phospho-beta-D-ribosyl)glycinamide contacts are provided by residues Asp282, Lys354, and Arg361–Arg362.

It belongs to the PurK/PurT family. In terms of assembly, homodimer.

It carries out the reaction N(1)-(5-phospho-beta-D-ribosyl)glycinamide + formate + ATP = N(2)-formyl-N(1)-(5-phospho-beta-D-ribosyl)glycinamide + ADP + phosphate + H(+). It functions in the pathway purine metabolism; IMP biosynthesis via de novo pathway; N(2)-formyl-N(1)-(5-phospho-D-ribosyl)glycinamide from N(1)-(5-phospho-D-ribosyl)glycinamide (formate route): step 1/1. Functionally, involved in the de novo purine biosynthesis. Catalyzes the transfer of formate to 5-phospho-ribosyl-glycinamide (GAR), producing 5-phospho-ribosyl-N-formylglycinamide (FGAR). Formate is provided by PurU via hydrolysis of 10-formyl-tetrahydrofolate. The protein is Formate-dependent phosphoribosylglycinamide formyltransferase of Synechococcus sp. (strain RCC307).